Here is a 102-residue protein sequence, read N- to C-terminus: uncharacterized protein (102 aa).

A disordered region spans residues 1–41; it reads MAAPRQIAFYGKGGTGKPKRKPEPVTASKEDRCLGSPSKNK.

The protein to the N-terminal of nitrogenase iron protein (NifH). Has lost the ATP-binding site.

In terms of biological role, this protein is either not expressed, expressed at low levels or rapidly degraded. This is an uncharacterized protein from Rhizobium meliloti (Ensifer meliloti).